A 348-amino-acid chain; its full sequence is Nuclear receptor subfamily 1 group I member 3 (348 aa).

Positions 8-83 form a DNA-binding region, nuclear receptor; that stretch reads PRSCMVCGDR…AGMKKEMILS (76 aa). The segment at 11-31 adopts an NR C4-type zinc-finger fold; sequence CMVCGDRATGYHFHALTCEGC. A Phosphothreonine; by PKC modification is found at Thr38. Residues 47–71 form an NR C4-type zinc finger; sequence CPFAGNCKVNKAQRRHCPACRLQKC. The region spanning 109-348 is the NR LBD domain; it reads GQQELVQTLL…MMPLLQEICS (240 aa).

Belongs to the nuclear hormone receptor family. NR1 subfamily. In terms of assembly, heterodimer of NR1I3 and RXR. Interacts with PSMC4. Interacts with ECT2. Directly interacts with DNAJC7; this complex may also include HSP90. Interacts with CRY1. Interacts with CRY2 in a ligand-dependent manner. Post-translationally, phosphorylated at Thr-38 by PKC, dephosphorylation of Thr-38 is required for nuclear translocation and activation.

It localises to the nucleus. Its subcellular location is the cytoplasm. The protein resides in the cytoskeleton. In terms of biological role, binds and transactivates the retinoic acid response elements that control expression of the retinoic acid receptor beta 2 and alcohol dehydrogenase 3 genes. Transactivates both the phenobarbital responsive element module of the human CYP2B6 gene and the CYP3A4 xenobiotic response element. This is Nuclear receptor subfamily 1 group I member 3 (NR1I3) from Callorhinus ursinus (Northern fur seal).